The sequence spans 210 residues: Outer-membrane lipoprotein LolB (210 aa).

Positions 1 to 26 (MSKLKIDTKRRFSLLIALVLIISLSS) are cleaved as a signal peptide. C27 carries the N-palmitoyl cysteine lipid modification. C27 carries S-diacylglycerol cysteine lipidation.

This sequence belongs to the LolB family. Monomer.

It is found in the cell outer membrane. Functionally, plays a critical role in the incorporation of lipoproteins in the outer membrane after they are released by the LolA protein. This Francisella tularensis subsp. novicida (strain U112) protein is Outer-membrane lipoprotein LolB.